Consider the following 485-residue polypeptide: Noelin (485 aa).

Positions M1–A16 are cleaved as a signal peptide. N-linked (GlcNAc...) asparagine glycans are attached at residues N33, N103, N187, N288, N307, N394, N431, and N473. The stretch at R87–L225 forms a coiled coil. One can recognise an Olfactomedin-like domain in the interval A226–H478. Residues C227 and C409 are joined by a disulfide bond.

As to quaternary structure, homotetramer; disulfide-linked. Dimer of dimers, giving rise to a V-shaped homotretramer. Component of the AMPAR complex. Glycosylated.

It localises to the secreted. Its subcellular location is the synapse. The protein resides in the endoplasmic reticulum. It is found in the cell projection. The protein localises to the axon. It localises to the perikaryon. Functionally, contributes to the regulation of axonal growth. May play an important role in regulating the production of neural crest cells by the neural tube. The chain is Noelin (OLFM1) from Gallus gallus (Chicken).